Reading from the N-terminus, the 536-residue chain is B3 domain-containing protein Os03g0619800 (536 aa).

A DNA-binding region (TF-B3 1) is located at residues 26–119; the sequence is MRCFLRRMAA…RYEVLILDSD (94 aa). The segment at 138 to 199 is disordered; it reads DKTVDPVDSS…VEPQTPSGSD (62 aa). Low complexity-rich tracts occupy residues 145 to 160 and 171 to 183; these read DSSG…SSRS and SSSE…SPSG. A DNA-binding region (TF-B3 2) is located at residues 231–330; that stretch reads VAVMKKCNLQ…AFTVHLLQAE (100 aa). A disordered region spans residues 335–396; sequence RDGTDVHKIG…SDGPSEPPYI (62 aa). Residues 344 to 355 show a composition bias toward polar residues; the sequence is GSSQNKRNSKMA. A compositionally biased stretch (basic and acidic residues) spans 372–382; sequence SNKHGVSHESL. Residues 429–529 constitute a DNA-binding region (TF-B3 3); sequence ISKLAGSGGK…TMEVHIISNL (101 aa).

It is found in the nucleus. This is B3 domain-containing protein Os03g0619800 from Oryza sativa subsp. japonica (Rice).